A 207-amino-acid chain; its full sequence is Large ribosomal subunit protein uL4 (207 aa).

The segment at R45–V89 is disordered. Residues G60–G71 are compositionally biased toward basic residues.

The protein belongs to the universal ribosomal protein uL4 family. Part of the 50S ribosomal subunit.

Functionally, one of the primary rRNA binding proteins, this protein initially binds near the 5'-end of the 23S rRNA. It is important during the early stages of 50S assembly. It makes multiple contacts with different domains of the 23S rRNA in the assembled 50S subunit and ribosome. Its function is as follows. Forms part of the polypeptide exit tunnel. This is Large ribosomal subunit protein uL4 from Bacillus anthracis (strain A0248).